The following is a 170-amino-acid chain: Acetyl-CoA decarbonylase/synthase complex subunit epsilon 1 (170 aa).

This sequence belongs to the CdhB family. Heterotetramer of two alpha and two epsilon subunits. The ACDS complex is made up of alpha, epsilon, beta, gamma and delta subunits with a probable stoichiometry of (alpha(2)epsilon(2))(4)-beta(8)-(gamma(1)delta(1))(8).

It functions in the pathway one-carbon metabolism; methanogenesis from acetate. In terms of biological role, part of a complex that catalyzes the reversible cleavage of acetyl-CoA, allowing growth on acetate as sole source of carbon and energy. The alpha-epsilon subcomponent functions as a carbon monoxide dehydrogenase. The precise role of the epsilon subunit is unclear; it may have a stabilizing role within the alpha(2)epsilon(2) component and/or be involved in electron transfer to FAD during a potential FAD-mediated CO oxidation. This chain is Acetyl-CoA decarbonylase/synthase complex subunit epsilon 1, found in Methanosarcina barkeri (strain Fusaro / DSM 804).